Reading from the N-terminus, the 439-residue chain is DNA primase DnaG (439 aa).

Residues 169-243 (DSIIVVEGRA…DIDYVARAPY (75 aa)) enclose the Toprim domain. 3 residues coordinate Mg(2+): E175, D217, and D219.

It belongs to the archaeal DnaG primase family. As to quaternary structure, forms a ternary complex with MCM helicase and DNA. Mg(2+) is required as a cofactor.

It catalyses the reaction ssDNA + n NTP = ssDNA/pppN(pN)n-1 hybrid + (n-1) diphosphate.. In terms of biological role, RNA polymerase that catalyzes the synthesis of short RNA molecules used as primers for DNA polymerase during DNA replication. This Methanococcus maripaludis (strain C7 / ATCC BAA-1331) protein is DNA primase DnaG.